The primary structure comprises 716 residues: Putative mannosyltransferase YkcB (716 aa).

8 helical membrane-spanning segments follow: residues 8–28 (LDIV…YNIW), 44–64 (MMQS…FITV), 87–107 (SVIL…YLLI), 118–135 (IASF…VART), 137–157 (NVDA…FKAI), 159–179 (KGKL…FNTK), 180–200 (MLQA…AANA), and 206–226 (IVSL…WPLI). The segment at 260-363 (TGQNSGGGQG…GSGMFGTGTP (104 aa)) is disordered. The span at 278-289 (EMSSSDNTQAPP) shows a compositional bias: polar residues. Residues 290–307 (NQSSSNSSSSDGKSSNGN) are compositionally biased toward low complexity. Residues 318–347 (PSGGQGGPPSGGDGGQGGPGGDGGKGGTGT) show a composition bias toward gly residues. 6 helical membrane-spanning segments follow: residues 376-396 (QISW…IAGA), 409-429 (TVFW…AEFF), 433-453 (YLIM…VALV), 462-482 (WKAW…LFIL), 491-511 (VGWS…LLLF), and 518-538 (FSYY…MYWA). Positions 664 to 716 (VASEKWQSSSDQKTENTDSADTSSSKASGENGKMGGPGGMNQSATLYELHADE) are disordered. The segment covering 680–694 (TDSADTSSSKASGEN) has biased composition (low complexity).

The protein belongs to the glycosyltransferase 39 family.

The protein resides in the cell membrane. This Bacillus subtilis (strain 168) protein is Putative mannosyltransferase YkcB (ykcB).